An 893-amino-acid chain; its full sequence is Sulfate permease 2 (893 aa).

Residues 1–25 are disordered; that stretch reads MSREGYPNFEEVEIPDFQETNNTVP. At 1–131 the chain is on the cytoplasmic side; the sequence is MSREGYPNFE…VFPIINWLPH (131 aa). A helical transmembrane segment spans residues 132–152; it reads YNFSWFTADLIAGITIGCVLV. Topologically, residues 153–163 are extracellular; that stretch reads PQSMSYAQVAT. A helical membrane pass occupies residues 164-184; it reads LPAQYGLYSSFIGAYSYSFFA. At 185-188 the chain is on the cytoplasmic side; sequence TSKD. Residues 189-209 form a helical membrane-spanning segment; the sequence is VCIGPVAVMSLQTAKVIADVT. Residues 210–221 are Extracellular-facing; the sequence is AKYPDGDSAITG. Residues 222–242 form a helical membrane-spanning segment; sequence PVIATTLALLCGIISAAVGFL. Over 243-244 the chain is Cytoplasmic; that stretch reads RL. Residues 245–265 traverse the membrane as a helical segment; sequence GFLVELISLNAVAGFMTGSAF. Residues 266–305 are Extracellular-facing; that stretch reads NILWGQVPALMGYNSLVNTRAATYKVVIETLKHLPDTKLD. The chain crosses the membrane as a helical span at residues 306-326; that stretch reads AVFGLIPLFLLYVWKWWCGTY. The Cytoplasmic segment spans residues 327-350; sequence GPRLNDRYNSKNPRLHKIIKWTYF. Residues 351 to 371 form a helical membrane-spanning segment; sequence YAQASRNGIIIIVFTCIGWAI. At 372-399 the chain is on the extracellular side; the sequence is TRGKSKSERPISILGSVPSGLKEVGVFH. A helical membrane pass occupies residues 400 to 420; the sequence is VPPGLMSKLGPNLPASIIVLL. Topologically, residues 421–443 are cytoplasmic; the sequence is LEHIAISKSFGRINDYKVVPDQE. A helical transmembrane segment spans residues 444–464; sequence LIAIGVSNLLGTFFNAYPATG. Residues 465-483 lie on the Extracellular side of the membrane; that stretch reads SFSRSALKAKCNVRTPLSG. A helical transmembrane segment spans residues 484–504; it reads LFSGSCVLLALYCLTGAFFYI. The Cytoplasmic segment spans residues 505 to 532; sequence PKATLSAVIIHAVSDLLASYQTTWNFWK. Residues 533–551 form a helical membrane-spanning segment; that stretch reads MNPLDFICFIVTVLITVFA. Topologically, residues 552-559 are extracellular; it reads SIEDGIYF. The chain crosses the membrane as a helical span at residues 560-580; the sequence is AMCWSCAMLILKVAFPAGKFL. The Cytoplasmic portion of the chain corresponds to 581-893; that stretch reads GRVEVAEVTD…DIPDFAKWDI (313 aa). The region spanning 676–854 is the STAS domain; sequence DVQILPPPDG…SIVAGHTSYH (179 aa).

Belongs to the SLC26A/SulP transporter (TC 2.A.53) family.

The protein localises to the membrane. In terms of biological role, high affinity uptake of sulfate into the cell. The chain is Sulfate permease 2 (SUL2) from Saccharomyces cerevisiae (strain ATCC 204508 / S288c) (Baker's yeast).